Reading from the N-terminus, the 293-residue chain is 4-diphosphocytidyl-2-C-methyl-D-erythritol kinase (293 aa).

Residue Lys10 is part of the active site. 94–104 (PVSAGLAGGSS) contributes to the ATP binding site. The active site involves Asp136.

This sequence belongs to the GHMP kinase family. IspE subfamily.

The enzyme catalyses 4-CDP-2-C-methyl-D-erythritol + ATP = 4-CDP-2-C-methyl-D-erythritol 2-phosphate + ADP + H(+). It functions in the pathway isoprenoid biosynthesis; isopentenyl diphosphate biosynthesis via DXP pathway; isopentenyl diphosphate from 1-deoxy-D-xylulose 5-phosphate: step 3/6. Its function is as follows. Catalyzes the phosphorylation of the position 2 hydroxy group of 4-diphosphocytidyl-2C-methyl-D-erythritol. This Listeria monocytogenes serotype 4b (strain CLIP80459) protein is 4-diphosphocytidyl-2-C-methyl-D-erythritol kinase.